Reading from the N-terminus, the 250-residue chain is Golgi SNAP receptor complex member 1 (250 aa).

A2 is modified (N-acetylalanine). The Cytoplasmic portion of the chain corresponds to 2–229; that stretch reads AAGTSNYWED…QRINLRKRRD (228 aa). Residues 9–30 adopt a coiled-coil conformation; sequence WEDLRKQARQLENELDLKLVSF. Residues 37–59 are disordered; sequence YSHSSARDGGRDRYSSDTTPLLN. Over residues 41–51 the composition is skewed to basic and acidic residues; the sequence is SARDGGRDRYS. Residues 68–95 are a coiled coil; it reads ETMAIEIEQLLARLTGVNDKMAEYTHSA. At S141 the chain carries Phosphoserine. The helical; Anchor for type IV membrane protein transmembrane segment at 230–250 threads the bilayer; that stretch reads SLILGGVIGICTILLLLYAFH.

This sequence belongs to the GOSR1 family. In terms of assembly, component of several multiprotein Golgi SNARE complexes. Identified in a SNARE complex with BET1, STX5 and YKT6, in a SNARE complex with BET1L, STX5 and YKT6, in a SNARE complex with STX5, GOSR2, SEC22B and BET1, and in complex with STX5 and COG3. Interacts with GABARAPL2. Interacts with the 34 kDa STX5 isoform.

The protein localises to the golgi apparatus membrane. Functionally, involved in transport from the ER to the Golgi apparatus as well as in intra-Golgi transport. It belongs to a super-family of proteins called t-SNAREs or soluble NSF (N-ethylmaleimide-sensitive factor) attachment protein receptor. May play a protective role against hydrogen peroxide induced cytotoxicity under glutathione depleted conditions in neuronal cells by regulating the intracellular ROS levels via inhibition of p38 MAPK (MAPK11, MAPK12, MAPK13 and MAPK14). Participates in docking and fusion stage of ER to cis-Golgi transport. Plays an important physiological role in VLDL-transport vesicle-Golgi fusion and thus in VLDL delivery to the hepatic cis-Golgi. This Rattus norvegicus (Rat) protein is Golgi SNAP receptor complex member 1 (Gosr1).